The following is a 288-amino-acid chain: Bifunctional protein FolD (288 aa).

NADP(+)-binding positions include glycine 166 to serine 168, serine 191, and isoleucine 232.

Belongs to the tetrahydrofolate dehydrogenase/cyclohydrolase family. In terms of assembly, homodimer.

The catalysed reaction is (6R)-5,10-methylene-5,6,7,8-tetrahydrofolate + NADP(+) = (6R)-5,10-methenyltetrahydrofolate + NADPH. The enzyme catalyses (6R)-5,10-methenyltetrahydrofolate + H2O = (6R)-10-formyltetrahydrofolate + H(+). It participates in one-carbon metabolism; tetrahydrofolate interconversion. Its function is as follows. Catalyzes the oxidation of 5,10-methylenetetrahydrofolate to 5,10-methenyltetrahydrofolate and then the hydrolysis of 5,10-methenyltetrahydrofolate to 10-formyltetrahydrofolate. The polypeptide is Bifunctional protein FolD (Rickettsia rickettsii (strain Iowa)).